A 964-amino-acid chain; its full sequence is Translation initiation factor IF-2 (964 aa).

Residues 105-119 show a composition bias toward low complexity; it reads AALAESEASEAAPVV. 2 disordered regions span residues 105 to 133 and 146 to 378; these read AALA…EHRR and KARQ…PTEP. Composition is skewed to basic and acidic residues over residues 123-133, 146-183, 197-253, and 266-278; these read EVARREEEHRR, KARQ…KAEE, EAPR…RAIR, and PAER…KKAE. A compositionally biased stretch (low complexity) spans 288-302; it reads KPAGEARPAAAKKPA. Pro residues predominate over residues 303-313; sequence APAPAAAPAPG. The tr-type G domain occupies 464-633; it reads TRPPVVTVMG…LLQAEVLELK (170 aa). Positions 473-480 are G1; the sequence is GHVDHGKT. 473–480 is a GTP binding site; the sequence is GHVDHGKT. The tract at residues 498–502 is G2; sequence GITQH. The interval 519–522 is G3; sequence DTPG. Residues 519–523 and 573–576 each bind GTP; these read DTPGH and TKVD. The tract at residues 573–576 is G4; that stretch reads TKVD. The tract at residues 609-611 is G5; the sequence is SAK.

This sequence belongs to the TRAFAC class translation factor GTPase superfamily. Classic translation factor GTPase family. IF-2 subfamily.

It is found in the cytoplasm. One of the essential components for the initiation of protein synthesis. Protects formylmethionyl-tRNA from spontaneous hydrolysis and promotes its binding to the 30S ribosomal subunits. Also involved in the hydrolysis of GTP during the formation of the 70S ribosomal complex. In Ralstonia pickettii (strain 12J), this protein is Translation initiation factor IF-2.